The primary structure comprises 225 residues: MAAASATSTDFVRFALDEGVLRFGSFKVKSGRTSPYFFNAGLFNSGASVGRLAQFYAQALVDSGIAFDMLFGPAYKGIPLATATAVALAGHPAMQGRDVPFAFNRKEAKDHGEGGTLVGAPLQGRVVIIDDVITAGTSVRESVEIIRAAGAEPAAVLIALDRQERAGPDDALSPHSAVQDVAKTYGMPVVSIASLADILALLQGDAQFAGNREAVLAYRGKYGVV.

Lys-29 contacts 5-phospho-alpha-D-ribose 1-diphosphate. 37 to 38 (FF) contributes to the orotate binding site. Residues 75–76 (YK), Arg-105, Lys-106, Lys-109, His-111, and 130–138 (DDVITAGTS) contribute to the 5-phospho-alpha-D-ribose 1-diphosphate site. Residues Thr-134 and Arg-162 each coordinate orotate.

This sequence belongs to the purine/pyrimidine phosphoribosyltransferase family. PyrE subfamily. In terms of assembly, homodimer. Mg(2+) is required as a cofactor.

The enzyme catalyses orotidine 5'-phosphate + diphosphate = orotate + 5-phospho-alpha-D-ribose 1-diphosphate. It functions in the pathway pyrimidine metabolism; UMP biosynthesis via de novo pathway; UMP from orotate: step 1/2. Functionally, catalyzes the transfer of a ribosyl phosphate group from 5-phosphoribose 1-diphosphate to orotate, leading to the formation of orotidine monophosphate (OMP). In Bordetella petrii (strain ATCC BAA-461 / DSM 12804 / CCUG 43448), this protein is Orotate phosphoribosyltransferase.